The primary structure comprises 160 residues: Sperm protein associated with the nucleus on the X chromosome N2 (160 aa).

2 disordered regions span residues 1–48 (MEKP…TSEY) and 64–160 (SNQL…GEED). Over residues 10 to 35 (GEKRKSPCDSNNRNDEMQETPNRDLA) the composition is skewed to basic and acidic residues. Residues 64-79 (SNQLENDQSQENSVNP) are compositionally biased toward polar residues. The span at 81-97 (QEEEDEGSSQEDEDLDS) shows a compositional bias: acidic residues. Basic and acidic residues predominate over residues 136-148 (SSERSSQEEKDPD).

Belongs to the SPAN-X family.

The polypeptide is Sperm protein associated with the nucleus on the X chromosome N2 (SPANXN2) (Pongo pygmaeus (Bornean orangutan)).